The following is a 204-amino-acid chain: Pneumococcal vaccine antigen A (204 aa).

The protein resides in the cell surface. In Streptococcus pneumoniae serotype 4 (strain ATCC BAA-334 / TIGR4), this protein is Pneumococcal vaccine antigen A (pvaA).